The following is a 285-amino-acid chain: Neuralized-like protein 2 (285 aa).

Positions 1–28 (MADPSEHVGLGGPRSPARPEPPPTRFHQ) are disordered. Residues 23-244 (PTRFHQVHGA…STKSVRLVQL (222 aa)) form the NHR domain. The region spanning 250–285 (SLQTLCRLVIHKRVVHRLAIDVLHLPKGLKDFCKYE) is the SOCS box domain.

In terms of assembly, probable component the ECS(NEURL2) E3 ubiquitin-protein ligase complex consisting of ELOB/Elongin B, ELOC/Elongin C, CUL5, RBX1 and NEURL2. Interacts with CTNNB1. In terms of tissue distribution, expressed specifically in skeletal and cardiac muscles.

The protein localises to the cytoplasm. It participates in protein modification; protein ubiquitination. Functionally, plays an important role in the process of myofiber differentiation and maturation. Probable substrate-recognition component of a SCF-like ECS (Elongin BC-CUL2/5-SOCS-box protein) E3 ubiquitin-protein ligase complex, which mediates the ubiquitination of proteins. Probably contributes to catalysis through recognition and positioning of the substrate and the ubiquitin-conjugating enzyme. During myogenesis, controls the ubiquitination and degradation of the specific pool of CTNNB1/beta-catenin located at the sarcolemma. The polypeptide is Neuralized-like protein 2 (Neurl2) (Mus musculus (Mouse)).